Consider the following 391-residue polypeptide: Thioredoxin-interacting protein (391 aa).

Residue Lys-212 forms a Glycyl lysine isopeptide (Lys-Gly) (interchain with G-Cter in ubiquitin) linkage. The residue at position 361 (Ser-361) is a Phosphoserine.

This sequence belongs to the arrestin family. In terms of assembly, homodimer; disulfide-linked. Interacts with TXN/thioredoxin through its redox-active site. Interacts with transcriptional repressors ZBTB16, ZBTB32 and HDAC1. Interacts with DDIT4. In terms of processing, ubiquitinated; undergoes heterotypic 'Lys-48'-/'Lys-63'-branched polyubiquitination catalyzed by ITCH and UBR5 resulting in proteasomal degradation. Deubiquitinated by USP5, leading to TXNIP stabilization.

It localises to the cytoplasm. Its function is as follows. May act as an oxidative stress mediator by inhibiting thioredoxin activity or by limiting its bioavailability. Interacts with COPS5 and restores COPS5-induced suppression of CDKN1B stability, blocking the COPS5-mediated translocation of CDKN1B from the nucleus to the cytoplasm. Functions as a transcriptional repressor, possibly by acting as a bridge molecule between transcription factors and corepressor complexes, and over-expression will induce G0/G1 cell cycle arrest. Required for the maturation of natural killer cells. Acts as a suppressor of tumor cell growth. Inhibits the proteasomal degradation of DDIT4, and thereby contributes to the inhibition of the mammalian target of rapamycin complex 1 (mTORC1). The sequence is that of Thioredoxin-interacting protein (TXNIP) from Pongo abelii (Sumatran orangutan).